Reading from the N-terminus, the 88-residue chain is Co-chaperonin GroES (88 aa).

This sequence belongs to the GroES chaperonin family. Heptamer of 7 subunits arranged in a ring. Interacts with the chaperonin GroEL.

Its subcellular location is the cytoplasm. Together with the chaperonin GroEL, plays an essential role in assisting protein folding. The GroEL-GroES system forms a nano-cage that allows encapsulation of the non-native substrate proteins and provides a physical environment optimized to promote and accelerate protein folding. GroES binds to the apical surface of the GroEL ring, thereby capping the opening of the GroEL channel. This is Co-chaperonin GroES from Rubrobacter xylanophilus (strain DSM 9941 / JCM 11954 / NBRC 16129 / PRD-1).